The primary structure comprises 120 residues: Internal scaffolding protein B (120 aa).

The segment covering 1–23 has biased composition (polar residues); that stretch reads MEQLTKNQAVATSQEAVQNQNEP. The disordered stretch occupies residues 1–64; the sequence is MEQLTKNQAV…PDIEAERKKR (64 aa). Composition is skewed to basic and acidic residues over residues 24–36 and 48–64; these read QLRD…DKSV and LRRD…RKKR.

This sequence belongs to the microviridae B protein family. As to quaternary structure, component of the procapsid complex composed of 60 copies of the internally located B, 240 copies of the external scaffolding protein D, 60 copies of each of the viral structural proteins F and G proteins, and 12 copies of H. The proteolytic cleavage of the internal scaffolding protein B releases the scaffold protein in order to continue virion assembly.

The protein localises to the host cytoplasm. In terms of biological role, participates in the assembly of the viral procapsid in the cytoplasm. Forms first a 12S pre-assembly complex with protein H, and F and G pentamers, then twelve 12S complexes are joined by the D protein to form the procapsid. Internal scaffold protein B is released from the procapsid upon genome packaging. Autoproteolytic activity cleaves protein B and probably facilitates its removal through the pores of the procapsid. The polypeptide is Internal scaffolding protein B (B) (Enterobacteria phage phiX174 (Isolate Sanger)).